Here is a 461-residue protein sequence, read N- to C-terminus: Serine carboxypeptidase-like 51 (461 aa).

The N-terminal stretch at 1 to 20 (MKTTVVYLVILCLIVSCTNG) is a signal peptide. N-linked (GlcNAc...) asparagine glycosylation is found at Asn-99 and Asn-152. The active site involves Ser-166. N-linked (GlcNAc...) asparagine glycosylation is present at Asn-340. Active-site residues include Asp-379 and His-438.

This sequence belongs to the peptidase S10 family. In terms of tissue distribution, expressed in seedlings, roots, flowers and siliques.

The protein resides in the secreted. In terms of biological role, probable carboxypeptidase. This Arabidopsis thaliana (Mouse-ear cress) protein is Serine carboxypeptidase-like 51 (SCPL51).